Reading from the N-terminus, the 390-residue chain is MRVVLIVLDSVGIGEMPDAHLYGDEGSNTIVNTAKAVSGLHLPNMAKLGLGNLDDIPGVEPVKPAEGIYGKMMEKSPGKDTTTGHWEIAGVILKKPFDLFPEGFPKELIEEFERRTGRKVIGNKPASGTEIIKELGPIHEKTGALIVYTSADSVFQIAAKKEIVPLEELYRYCEIARELLNEMGYKVARVIARPFTGEWPNYVRTPERKDFSLEPEGKTLLDVLTENGIPVYGVGKIADIFAGRGVTENYKTKDNNDGIDKTISLMKEKNHDCLIFTNLVDFDTKYGHRNDPVSYAKALEEFDARLPEIMHNLNEDDVLFITADHGCDPTTPSTDHSREMVPLLGYGGRLKKDVYVGIRETFADLGQTIADIFGVPPLENGTSFKNLIWE.

Residues Asp9, Asp283, His288, Asp324, His325, and His336 each contribute to the Mn(2+) site.

It belongs to the phosphopentomutase family. Requires Mn(2+) as cofactor.

The protein localises to the cytoplasm. The catalysed reaction is 2-deoxy-alpha-D-ribose 1-phosphate = 2-deoxy-D-ribose 5-phosphate. It catalyses the reaction alpha-D-ribose 1-phosphate = D-ribose 5-phosphate. The protein operates within carbohydrate degradation; 2-deoxy-D-ribose 1-phosphate degradation; D-glyceraldehyde 3-phosphate and acetaldehyde from 2-deoxy-alpha-D-ribose 1-phosphate: step 1/2. In terms of biological role, isomerase that catalyzes the conversion of deoxy-ribose 1-phosphate (dRib-1-P) and ribose 1-phosphate (Rib-1-P) to deoxy-ribose 5-phosphate (dRib-5-P) and ribose 5-phosphate (Rib-5-P), respectively. The polypeptide is Phosphopentomutase (Thermotoga maritima (strain ATCC 43589 / DSM 3109 / JCM 10099 / NBRC 100826 / MSB8)).